Consider the following 207-residue polypeptide: Probable RNA 2'-phosphotransferase (207 aa).

The protein belongs to the KptA/TPT1 family.

In terms of biological role, removes the 2'-phosphate from RNA via an intermediate in which the phosphate is ADP-ribosylated by NAD followed by a presumed transesterification to release the RNA and generate ADP-ribose 1''-2''-cyclic phosphate (APPR&gt;P). May function as an ADP-ribosylase. This chain is Probable RNA 2'-phosphotransferase, found in Methanosarcina mazei (strain ATCC BAA-159 / DSM 3647 / Goe1 / Go1 / JCM 11833 / OCM 88) (Methanosarcina frisia).